We begin with the raw amino-acid sequence, 898 residues long: DNA mismatch repair protein MutS (898 aa).

646–653 is an ATP binding site; sequence GPNMGGKS.

Belongs to the DNA mismatch repair MutS family.

Its function is as follows. This protein is involved in the repair of mismatches in DNA. It is possible that it carries out the mismatch recognition step. This protein has a weak ATPase activity. The chain is DNA mismatch repair protein MutS from Brucella ovis (strain ATCC 25840 / 63/290 / NCTC 10512).